We begin with the raw amino-acid sequence, 297 residues long: Protein phosphatase PTC7 homolog (297 aa).

The transit peptide at 1 to 27 (MLSVLSYGRLVARAVIGGLSQTDSRDY) directs the protein to the mitochondrion. The region spanning 28–292 (SLVSASFGFG…DDITVLLSIV (265 aa)) is the PPM-type phosphatase domain. Mn(2+) is bound by residues D71, G72, and D216.

It belongs to the PP2C family. Requires Mg(2+) as cofactor. It depends on Mn(2+) as a cofactor.

Its subcellular location is the mitochondrion matrix. The catalysed reaction is O-phospho-L-seryl-[protein] + H2O = L-seryl-[protein] + phosphate. It catalyses the reaction O-phospho-L-threonyl-[protein] + H2O = L-threonyl-[protein] + phosphate. Its function is as follows. Protein phosphatase which positively regulates biosynthesis of the ubiquinone, coenzyme Q. Dephosphorylates the ubiquinone biosynthesis protein coq7 which is likely to lead to its activation. The protein is Protein phosphatase PTC7 homolog (pptc7) of Danio rerio (Zebrafish).